A 551-amino-acid polypeptide reads, in one-letter code: Methionine--tRNA ligase (551 aa).

The 'HIGH' region signature appears at 12-22 (PYANGPLHFGH). Zn(2+) contacts are provided by Cys-144, Cys-147, Cys-157, and Cys-160. The 'KMSKS' region motif lies at 330–334 (QFSKS). Lys-333 is an ATP binding site.

The protein belongs to the class-I aminoacyl-tRNA synthetase family. MetG type 1 subfamily. Monomer. Zn(2+) serves as cofactor.

The protein resides in the cytoplasm. The enzyme catalyses tRNA(Met) + L-methionine + ATP = L-methionyl-tRNA(Met) + AMP + diphosphate. Is required not only for elongation of protein synthesis but also for the initiation of all mRNA translation through initiator tRNA(fMet) aminoacylation. This chain is Methionine--tRNA ligase (metG), found in Chlamydia pneumoniae (Chlamydophila pneumoniae).